A 150-amino-acid chain; its full sequence is SKP1-like protein 17 (150 aa).

Residues 92-150 (LDAADYLIVIGLKNLIAQAIADYTADKTVNEIRELFNIENDYTPEEEEELRKKNEWAFN) are interaction with the F-box domain of F-box proteins.

Belongs to the SKP1 family. As to quaternary structure, part of a SCF (SKP1-cullin-F-box) protein ligase complex. Interacts with CPR1/CPR30. Mainly detected in the siliques.

The protein localises to the nucleus. The protein operates within protein modification; protein ubiquitination. Involved in ubiquitination and subsequent proteasomal degradation of target proteins. Together with CUL1, RBX1 and a F-box protein, it forms a SCF E3 ubiquitin ligase complex. The functional specificity of this complex depends on the type of F-box protein. In the SCF complex, it serves as an adapter that links the F-box protein to CUL1. Probably implicated in incompatibility response after hybridization. The chain is SKP1-like protein 17 (ASK17) from Arabidopsis thaliana (Mouse-ear cress).